Reading from the N-terminus, the 276-residue chain is Undecaprenyl-diphosphatase (276 aa).

7 helical membrane passes run 46–66 (AGASFAAVIQLGSLGAVLIYF), 94–114 (LMGILVGTLPIVIAGWAVKAI), 122–142 (LWVVAAAAIGLALALGWAERV), 152–172 (LGIGDGLWVGLAQALALIPGV), 196–216 (SFLLGIPALFLAGVAEFIAEF), 226–246 (LGTLSAFVFSYGSIDWLIRFL), and 253–273 (VFIVYRIGFGLFIFLGLALGF).

It belongs to the UppP family.

The protein resides in the cell inner membrane. It carries out the reaction di-trans,octa-cis-undecaprenyl diphosphate + H2O = di-trans,octa-cis-undecaprenyl phosphate + phosphate + H(+). Its function is as follows. Catalyzes the dephosphorylation of undecaprenyl diphosphate (UPP). Confers resistance to bacitracin. This Synechococcus sp. (strain JA-3-3Ab) (Cyanobacteria bacterium Yellowstone A-Prime) protein is Undecaprenyl-diphosphatase.